The chain runs to 185 residues: Large ribosomal subunit protein uL10 (185 aa).

Residues Leu165–Glu185 are disordered.

It belongs to the universal ribosomal protein uL10 family. Part of the ribosomal stalk of the 50S ribosomal subunit. The N-terminus interacts with L11 and the large rRNA to form the base of the stalk. The C-terminus forms an elongated spine to which L12 dimers bind in a sequential fashion forming a multimeric L10(L12)X complex.

Its function is as follows. Forms part of the ribosomal stalk, playing a central role in the interaction of the ribosome with GTP-bound translation factors. This chain is Large ribosomal subunit protein uL10, found in Streptomyces griseus subsp. griseus (strain JCM 4626 / CBS 651.72 / NBRC 13350 / KCC S-0626 / ISP 5235).